Reading from the N-terminus, the 571-residue chain is NADH-quinone oxidoreductase subunit C/D (571 aa).

The NADH dehydrogenase I subunit C stretch occupies residues M1–R171. An NADH dehydrogenase I subunit D region spans residues A194 to R571.

It in the N-terminal section; belongs to the complex I 30 kDa subunit family. This sequence in the C-terminal section; belongs to the complex I 49 kDa subunit family. NDH-1 is composed of 13 different subunits. Subunits NuoB, CD, E, F, and G constitute the peripheral sector of the complex.

Its subcellular location is the cell inner membrane. It carries out the reaction a quinone + NADH + 5 H(+)(in) = a quinol + NAD(+) + 4 H(+)(out). Its function is as follows. NDH-1 shuttles electrons from NADH, via FMN and iron-sulfur (Fe-S) centers, to quinones in the respiratory chain. The immediate electron acceptor for the enzyme in this species is believed to be ubiquinone. Couples the redox reaction to proton translocation (for every two electrons transferred, four hydrogen ions are translocated across the cytoplasmic membrane), and thus conserves the redox energy in a proton gradient. In Hydrogenobaculum sp. (strain Y04AAS1), this protein is NADH-quinone oxidoreductase subunit C/D (nuoC).